The primary structure comprises 187 residues: Keratin-associated protein 5-8 (187 aa).

9 tandem repeats follow at residues 28–31 (CCVP), 34–37 (CCKP), 40–43 (CCVP), 109–112 (CCKP), 119–122 (CCKP), 138–141 (CCKP), 148–151 (CCKP), 167–170 (CCKP), and 177–180 (CCVP). The 9 X 4 AA repeats of C-C-X-P stretch occupies residues 28-180 (CCVPICCCKP…CCSQSSCCVP (153 aa)).

The protein belongs to the KRTAP type 5 family. In terms of tissue distribution, restricted to hair root, not detected in any other tissues. Expressed in cuticle layers of differentiating hair follicles.

In terms of biological role, in the hair cortex, hair keratin intermediate filaments are embedded in an interfilamentous matrix, consisting of hair keratin-associated protein (KRTAP), which are essential for the formation of a rigid and resistant hair shaft through their extensive disulfide bond cross-linking with abundant cysteine residues of hair keratins. The matrix proteins include the high-sulfur and high-glycine-tyrosine keratins. The polypeptide is Keratin-associated protein 5-8 (KRTAP5-8) (Homo sapiens (Human)).